A 292-amino-acid chain; its full sequence is Phosphoribulokinase, plasmid (292 aa).

12–20 (GSSGAGTTS) is a binding site for ATP.

This sequence belongs to the phosphoribulokinase family. As to quaternary structure, homooctamer.

It catalyses the reaction D-ribulose 5-phosphate + ATP = D-ribulose 1,5-bisphosphate + ADP + H(+). It participates in carbohydrate biosynthesis; Calvin cycle. The protein is Phosphoribulokinase, plasmid (cfxP) of Cupriavidus necator (strain ATCC 17699 / DSM 428 / KCTC 22496 / NCIMB 10442 / H16 / Stanier 337) (Ralstonia eutropha).